The sequence spans 159 residues: V-type proton ATPase 16 kDa proteolipid subunit c (159 aa).

The Lumenal segment spans residues Met-1–Tyr-12. The chain crosses the membrane as a helical span at residues Gly-13 to Gly-35. Topologically, residues Thr-36 to Ser-57 are cytoplasmic. The chain crosses the membrane as a helical span at residues Ile-58–Ile-78. At Ala-79–His-96 the chain is on the lumenal side. The chain crosses the membrane as a helical span at residues Leu-97 to Gly-118. Topologically, residues Asp-119–Arg-130 are cytoplasmic. The chain crosses the membrane as a helical span at residues Leu-131–Leu-156. At Tyr-157 to Lys-159 the chain is on the lumenal side.

Belongs to the V-ATPase proteolipid subunit family. As to quaternary structure, V-ATPase is a heteromultimeric enzyme made up of two complexes: the ATP-hydrolytic V1 complex and the proton translocation V0 complex. The V1 complex consists of three catalytic AB heterodimers that form a heterohexamer, three peripheral stalks each consisting of EG heterodimers, one central rotor including subunits D and F, and the regulatory subunits C and H. The proton translocation complex V0 consists of the proton transport subunit a, a ring of proteolipid subunits c9c'', rotary subunit d, subunits e and f, and the accessory subunits VhaAC45 and ATP6AP2. Expressed in the larval middle mid-gut; predominantly in the copper cell region with lower levels of expression in the interstitial cells.

The protein localises to the membrane. Proton-conducting pore forming subunit of the V0 complex of vacuolar(H+)-ATPase (V-ATPase), a multisubunit enzyme composed of a peripheral complex (V1) that hydrolyzes ATP and a membrane integral complex (V0) that translocates protons. V-ATPase is responsible for acidifying and maintaining the pH of intracellular compartments and in some cell types, is targeted to the plasma membrane, where it is responsible for acidifying the extracellular environment. In enterocytes, acts as part of a pHCl-2 sensory pathway which mediates Tor-dependent larval growth and metabolism in response to zinc availability. Likely acts in maintaining enterocyte lysosomal acidification which consequently promotes Tor activation at the lysosome membrane. This is V-type proton ATPase 16 kDa proteolipid subunit c (Vha16-1) from Drosophila melanogaster (Fruit fly).